A 735-amino-acid chain; its full sequence is Phosphoribosylformylglycinamidine synthase subunit PurL (735 aa).

Residue His-44 is part of the active site. Residues Tyr-47 and Lys-86 each coordinate ATP. Glu-88 lines the Mg(2+) pocket. Residues 89–92 (SHNH) and Arg-111 contribute to the substrate site. His-90 functions as the Proton acceptor in the catalytic mechanism. Asp-112 is a Mg(2+) binding site. Gln-240 provides a ligand contact to substrate. Asp-268 is a binding site for Mg(2+). 312-314 (ESQ) provides a ligand contact to substrate. The ATP site is built by Asp-496 and Gly-533. Asn-534 provides a ligand contact to Mg(2+). Ser-536 contributes to the substrate binding site.

This sequence belongs to the FGAMS family. Monomer. Part of the FGAM synthase complex composed of 1 PurL, 1 PurQ and 2 PurS subunits.

The protein localises to the cytoplasm. The enzyme catalyses N(2)-formyl-N(1)-(5-phospho-beta-D-ribosyl)glycinamide + L-glutamine + ATP + H2O = 2-formamido-N(1)-(5-O-phospho-beta-D-ribosyl)acetamidine + L-glutamate + ADP + phosphate + H(+). It participates in purine metabolism; IMP biosynthesis via de novo pathway; 5-amino-1-(5-phospho-D-ribosyl)imidazole from N(2)-formyl-N(1)-(5-phospho-D-ribosyl)glycinamide: step 1/2. Its function is as follows. Part of the phosphoribosylformylglycinamidine synthase complex involved in the purines biosynthetic pathway. Catalyzes the ATP-dependent conversion of formylglycinamide ribonucleotide (FGAR) and glutamine to yield formylglycinamidine ribonucleotide (FGAM) and glutamate. The FGAM synthase complex is composed of three subunits. PurQ produces an ammonia molecule by converting glutamine to glutamate. PurL transfers the ammonia molecule to FGAR to form FGAM in an ATP-dependent manner. PurS interacts with PurQ and PurL and is thought to assist in the transfer of the ammonia molecule from PurQ to PurL. This chain is Phosphoribosylformylglycinamidine synthase subunit PurL, found in Nitratiruptor sp. (strain SB155-2).